Here is a 101-residue protein sequence, read N- to C-terminus: MLTLAHYLVLGAILFAISIVGIFLNRRNVIIILMAIELMLLAVNTNFVAFSHYLGDVHGQIFVFFVLTVAAAEAAIGLAILVTLFRSLDTINVEDLDQLKG.

Transmembrane regions (helical) follow at residues leucine 4–leucine 24, isoleucine 30–phenylalanine 50, and isoleucine 61–leucine 81.

It belongs to the complex I subunit 4L family. In terms of assembly, NDH-1 is composed of 14 different subunits. Subunits NuoA, H, J, K, L, M, N constitute the membrane sector of the complex.

Its subcellular location is the cell inner membrane. The catalysed reaction is a quinone + NADH + 5 H(+)(in) = a quinol + NAD(+) + 4 H(+)(out). In terms of biological role, NDH-1 shuttles electrons from NADH, via FMN and iron-sulfur (Fe-S) centers, to quinones in the respiratory chain. The immediate electron acceptor for the enzyme in this species is believed to be ubiquinone. Couples the redox reaction to proton translocation (for every two electrons transferred, four hydrogen ions are translocated across the cytoplasmic membrane), and thus conserves the redox energy in a proton gradient. This is NADH-quinone oxidoreductase subunit K from Paraburkholderia xenovorans (strain LB400).